The primary structure comprises 712 residues: DNA ligase (712 aa).

Residues 1 to 22 show a composition bias toward low complexity; it reads MSTQYDSDSSPAASNSGSADPA. A disordered region spans residues 1-23; that stretch reads MSTQYDSDSSPAASNSGSADPAL. Position 53–57 (53–57) interacts with NAD(+); the sequence is DAEFD. A disordered region spans residues 69–93; sequence SHPEAVTGPSPTTEVAPSPPESSPF. NAD(+) is bound by residues 104–105 and Glu129; that span reads SL. Residue Lys131 is the N6-AMP-lysine intermediate of the active site. Arg152, Glu192, Lys308, and Lys332 together coordinate NAD(+). Zn(2+)-binding residues include Cys426, Cys429, Cys445, and Cys451. One can recognise a BRCT domain in the interval 624 to 712; the sequence is IQADLLAGLS…GPGKGDAEED (89 aa).

This sequence belongs to the NAD-dependent DNA ligase family. LigA subfamily. The cofactor is Mg(2+). Mn(2+) serves as cofactor.

It carries out the reaction NAD(+) + (deoxyribonucleotide)n-3'-hydroxyl + 5'-phospho-(deoxyribonucleotide)m = (deoxyribonucleotide)n+m + AMP + beta-nicotinamide D-nucleotide.. Functionally, DNA ligase that catalyzes the formation of phosphodiester linkages between 5'-phosphoryl and 3'-hydroxyl groups in double-stranded DNA using NAD as a coenzyme and as the energy source for the reaction. It is essential for DNA replication and repair of damaged DNA. The chain is DNA ligase from Corynebacterium urealyticum (strain ATCC 43042 / DSM 7109).